A 94-amino-acid polypeptide reads, in one-letter code: Conotoxin Cal22a (94 aa).

The signal sequence occupies residues 1-24 (MMSTKGITLFLCLLLLALATSVNG). A propeptide spanning residues 25–44 (GQGTRRSRMTRALHGGRPSA) is cleaved from the precursor.

Post-translationally, contains 4 disulfide bonds. As to expression, expressed by the venom duct.

It localises to the secreted. Its function is as follows. Probable neurotoxin with unknown target. Possibly targets ion channels. In Californiconus californicus (California cone), this protein is Conotoxin Cal22a.